The following is a 137-amino-acid chain: Competence protein ComGG (137 aa).

Residues 10 to 30 (GVLLYAVTIAAIFSLLLQFYL) traverse the membrane as a helical segment. The tract at residues 106-137 (EKRDKKEEVATDSSEKVEKKKSEEKPEKKENS) is disordered.

In terms of assembly, the transformation pili are flexible filaments, consisting mainly of the major pilin ComGC and smaller amounts of the minor pilins, including at least ComGD, ComGF and ComGG, and perhaps ComGE. Interacts with ComGC; the interaction is probably direct. Interacts with ComGD. Interacts with ComGE. Interacts with ComGF. May act as a link between ComGC, ComGD and ComGF.

It is found in the fimbrium. Its subcellular location is the cell membrane. Required for formation of the type IV-like pilus (T4P) that plays a role in transformation. Transformation pili are dynamically extended and retracted, perhaps thereby promoting DNA uptake and transformation. Required for transformation. The sequence is that of Competence protein ComGG from Streptococcus pneumoniae (strain ATCC BAA-255 / R6).